A 251-amino-acid polypeptide reads, in one-letter code: MTSIILIPARMASTRLPGKPLADIAGRTMIAQVVARALESGVGRVVVATDTEEVAAAARAEGVEAVMTRADHQSGSDRIFEALQTIDPGATAEIVINLQGDLPTIPPEDIRAVVRPLENADTDIATLGVEISDEEEKANPNVVKIVGVPVKTASDALRLRALYFTRATAPWGEGPLFHHIGIYAYRRRALERFVALPPGTLEMRERLEQLRALEAGMRIEAEIVRSVPLGVDTPADLERARQLLSARTESR.

This sequence belongs to the KdsB family.

It is found in the cytoplasm. It carries out the reaction 3-deoxy-alpha-D-manno-oct-2-ulosonate + CTP = CMP-3-deoxy-beta-D-manno-octulosonate + diphosphate. The protein operates within nucleotide-sugar biosynthesis; CMP-3-deoxy-D-manno-octulosonate biosynthesis; CMP-3-deoxy-D-manno-octulosonate from 3-deoxy-D-manno-octulosonate and CTP: step 1/1. It participates in bacterial outer membrane biogenesis; lipopolysaccharide biosynthesis. Functionally, activates KDO (a required 8-carbon sugar) for incorporation into bacterial lipopolysaccharide in Gram-negative bacteria. The sequence is that of 3-deoxy-manno-octulosonate cytidylyltransferase from Chelativorans sp. (strain BNC1).